Here is a 121-residue protein sequence, read N- to C-terminus: Phosphoribosyl-ATP pyrophosphatase (121 aa).

The protein belongs to the PRA-PH family.

It localises to the cytoplasm. The catalysed reaction is 1-(5-phospho-beta-D-ribosyl)-ATP + H2O = 1-(5-phospho-beta-D-ribosyl)-5'-AMP + diphosphate + H(+). It functions in the pathway amino-acid biosynthesis; L-histidine biosynthesis; L-histidine from 5-phospho-alpha-D-ribose 1-diphosphate: step 2/9. In Burkholderia ambifaria (strain MC40-6), this protein is Phosphoribosyl-ATP pyrophosphatase.